An 81-amino-acid chain; its full sequence is Exodeoxyribonuclease 7 small subunit (81 aa).

The protein belongs to the XseB family. In terms of assembly, heterooligomer composed of large and small subunits.

The protein resides in the cytoplasm. The enzyme catalyses Exonucleolytic cleavage in either 5'- to 3'- or 3'- to 5'-direction to yield nucleoside 5'-phosphates.. Its function is as follows. Bidirectionally degrades single-stranded DNA into large acid-insoluble oligonucleotides, which are then degraded further into small acid-soluble oligonucleotides. This Pasteurella multocida (strain Pm70) protein is Exodeoxyribonuclease 7 small subunit.